Here is a 441-residue protein sequence, read N- to C-terminus: Adenylyltransferase and sulfurtransferase MOCS3 (441 aa).

ATP is bound by residues Gly-83, Asp-104, 111-115 (TNLHR), Lys-128, and 172-173 (DN). Zn(2+) contacts are provided by Cys-213 and Cys-216. Cys-230 (glycyl thioester intermediate; for adenylyltransferase activity) is an active-site residue. The Zn(2+) site is built by Cys-288 and Cys-291. The 101-residue stretch at 339–439 (AGRDHLLVDV…WTKTIDPNFP (101 aa)) folds into the Rhodanese domain. The active-site Cysteine persulfide intermediate; for sulfurtransferase activity is Cys-395.

In the N-terminal section; belongs to the HesA/MoeB/ThiF family. UBA4 subfamily. Zn(2+) serves as cofactor.

Its subcellular location is the cytoplasm. The enzyme catalyses [molybdopterin-synthase sulfur-carrier protein]-C-terminal Gly-Gly + ATP + H(+) = [molybdopterin-synthase sulfur-carrier protein]-C-terminal Gly-Gly-AMP + diphosphate. It catalyses the reaction [molybdopterin-synthase sulfur-carrier protein]-C-terminal Gly-Gly-AMP + S-sulfanyl-L-cysteinyl-[cysteine desulfurase] + AH2 = [molybdopterin-synthase sulfur-carrier protein]-C-terminal-Gly-aminoethanethioate + L-cysteinyl-[cysteine desulfurase] + A + AMP + 2 H(+). It functions in the pathway tRNA modification; 5-methoxycarbonylmethyl-2-thiouridine-tRNA biosynthesis. The protein operates within cofactor biosynthesis; molybdopterin biosynthesis. Plays a central role in 2-thiolation of mcm(5)S(2)U at tRNA wobble positions of cytosolic tRNA(Lys), tRNA(Glu) and tRNA(Gln). Also essential during biosynthesis of the molybdenum cofactor. Acts by mediating the C-terminal thiocarboxylation of sulfur carriers URM1 and MOCS2A. Its N-terminus first activates URM1 and MOCS2A as acyl-adenylates (-COAMP), then the persulfide sulfur on the catalytic cysteine is transferred to URM1 and MOCS2A to form thiocarboxylation (-COSH) of their C-terminus. The reaction probably involves hydrogen sulfide that is generated from the persulfide intermediate and that acts as a nucleophile towards URM1 and MOCS2A. Subsequently, a transient disulfide bond is formed. Does not use thiosulfate as sulfur donor; NFS1 probably acting as a sulfur donor for thiocarboxylation reactions. The protein is Adenylyltransferase and sulfurtransferase MOCS3 of Anopheles gambiae (African malaria mosquito).